Consider the following 84-residue polypeptide: RNA-binding protein Hfq (84 aa).

One can recognise a Sm domain in the interval 9–68; it reads DPYLNTLRKERVPVSIYLVNGIKLQGQIESFDQFVILLKNTVSQMVYKHAISTVVPSRPV.

Belongs to the Hfq family. As to quaternary structure, homohexamer.

Functionally, RNA chaperone that binds small regulatory RNA (sRNAs) and mRNAs to facilitate mRNA translational regulation in response to envelope stress, environmental stress and changes in metabolite concentrations. Also binds with high specificity to tRNAs. The sequence is that of RNA-binding protein Hfq from Azotobacter vinelandii (strain DJ / ATCC BAA-1303).